A 201-amino-acid chain; its full sequence is Peptide deformylase (201 aa).

The segment at 1–21 is disordered; the sequence is MANHFSQLAKKSRTNGNAEKI. The Fe cation site is built by Cys-121 and His-163. The active site involves Glu-164. His-167 is a binding site for Fe cation.

Belongs to the polypeptide deformylase family. Requires Fe(2+) as cofactor.

The catalysed reaction is N-terminal N-formyl-L-methionyl-[peptide] + H2O = N-terminal L-methionyl-[peptide] + formate. Functionally, removes the formyl group from the N-terminal Met of newly synthesized proteins. Requires at least a dipeptide for an efficient rate of reaction. N-terminal L-methionine is a prerequisite for activity but the enzyme has broad specificity at other positions. This is Peptide deformylase from Prochlorococcus marinus (strain AS9601).